The sequence spans 212 residues: Ribosomal RNA small subunit methyltransferase G (212 aa).

S-adenosyl-L-methionine is bound by residues G73, F78, 124-125, and R137; that span reads IE.

It belongs to the methyltransferase superfamily. RNA methyltransferase RsmG family.

It localises to the cytoplasm. In terms of biological role, specifically methylates the N7 position of a guanine in 16S rRNA. This Karelsulcia muelleri (strain GWSS) (Sulcia muelleri) protein is Ribosomal RNA small subunit methyltransferase G.